Reading from the N-terminus, the 464-residue chain is Argininosuccinate lyase (464 aa).

This sequence belongs to the lyase 1 family. Argininosuccinate lyase subfamily.

It localises to the cytoplasm. It carries out the reaction 2-(N(omega)-L-arginino)succinate = fumarate + L-arginine. The protein operates within amino-acid biosynthesis; L-arginine biosynthesis; L-arginine from L-ornithine and carbamoyl phosphate: step 3/3. The chain is Argininosuccinate lyase from Sulfurovum sp. (strain NBC37-1).